A 290-amino-acid chain; its full sequence is 4-hydroxy-3-methylbut-2-enyl diphosphate reductase (290 aa).

Position 13 (Cys-13) interacts with [4Fe-4S] cluster. (2E)-4-hydroxy-3-methylbut-2-enyl diphosphate is bound by residues His-41 and His-75. Dimethylallyl diphosphate is bound by residues His-41 and His-75. Residues His-41 and His-75 each coordinate isopentenyl diphosphate. Cys-97 is a binding site for [4Fe-4S] cluster. (2E)-4-hydroxy-3-methylbut-2-enyl diphosphate is bound at residue His-129. His-129 contacts dimethylallyl diphosphate. His-129 serves as a coordination point for isopentenyl diphosphate. Glu-131 acts as the Proton donor in catalysis. Thr-167 contacts (2E)-4-hydroxy-3-methylbut-2-enyl diphosphate. Residue Cys-198 participates in [4Fe-4S] cluster binding. The (2E)-4-hydroxy-3-methylbut-2-enyl diphosphate site is built by Ser-226, Ser-227, Asn-228, and Ser-270. The dimethylallyl diphosphate site is built by Ser-226, Ser-227, Asn-228, and Ser-270. 4 residues coordinate isopentenyl diphosphate: Ser-226, Ser-227, Asn-228, and Ser-270.

This sequence belongs to the IspH family. [4Fe-4S] cluster serves as cofactor.

The enzyme catalyses isopentenyl diphosphate + 2 oxidized [2Fe-2S]-[ferredoxin] + H2O = (2E)-4-hydroxy-3-methylbut-2-enyl diphosphate + 2 reduced [2Fe-2S]-[ferredoxin] + 2 H(+). The catalysed reaction is dimethylallyl diphosphate + 2 oxidized [2Fe-2S]-[ferredoxin] + H2O = (2E)-4-hydroxy-3-methylbut-2-enyl diphosphate + 2 reduced [2Fe-2S]-[ferredoxin] + 2 H(+). It participates in isoprenoid biosynthesis; dimethylallyl diphosphate biosynthesis; dimethylallyl diphosphate from (2E)-4-hydroxy-3-methylbutenyl diphosphate: step 1/1. Its pathway is isoprenoid biosynthesis; isopentenyl diphosphate biosynthesis via DXP pathway; isopentenyl diphosphate from 1-deoxy-D-xylulose 5-phosphate: step 6/6. Its function is as follows. Catalyzes the conversion of 1-hydroxy-2-methyl-2-(E)-butenyl 4-diphosphate (HMBPP) into a mixture of isopentenyl diphosphate (IPP) and dimethylallyl diphosphate (DMAPP). Acts in the terminal step of the DOXP/MEP pathway for isoprenoid precursor biosynthesis. The chain is 4-hydroxy-3-methylbut-2-enyl diphosphate reductase from Parabacteroides distasonis (strain ATCC 8503 / DSM 20701 / CIP 104284 / JCM 5825 / NCTC 11152).